The sequence spans 189 residues: MSKPTREEAKEAVRTLLKFIGEDPSREGLLKTPDRVINSYAEIFSGYGKDVAKILNTKFYETCNFQDFILLNIKFTSFCEHHILPFNGTVDIAYVPDNCIVGISKLARIVNIFARRLQIQEKMTVQIAESVQENLKPLGVAVKISAVHSCMSMRGVMQDNSVMNTMHYTGIFAEQQKYRHEFLNLTAKR.

Zn(2+) is bound by residues C79, H82, and C150.

Belongs to the GTP cyclohydrolase I family. Toroid-shaped homodecamer, composed of two pentamers of five dimers.

The enzyme catalyses GTP + H2O = 7,8-dihydroneopterin 3'-triphosphate + formate + H(+). It participates in cofactor biosynthesis; 7,8-dihydroneopterin triphosphate biosynthesis; 7,8-dihydroneopterin triphosphate from GTP: step 1/1. The sequence is that of GTP cyclohydrolase 1 from Rickettsia massiliae (strain Mtu5).